The primary structure comprises 562 residues: MGTIRSSALILACLALASAASEGAFKVSDQREMKPEHLFQHLHEVGYAAPPSPPQTRRLQVHHSETSPHDPPLFEEQKEVQPPSSPEDIPVYEEEWLTFLNPNVGKVDPALPQEAIPLQKEQPPPRIPIEQKEIDPPVQHQEEIVQSRQKEEKPPTLTGQHPPEPRTWNPARHCQQGRRGIWGHRLDGFPPGRPSPDNLKQICLPERQHVVYGPWNLPQTGYSHLSRQGEALNLLETGYSRCCRCRSDTNRLDCVKLVWEDAMTQFCEAEFSVKTRPHLCCKQRGEERFSCFQKEAPRPDYLLRPCPIHQTGISSGTQLPFPPGLPTPDNVKNICLLRRFRSVPRNLPATDAIQRQLQALTRLETEFQRCCRQGHNHTCTWKAWEDTLDGYCDRELAIKTHPHSCCHYPPSPARDECFAHLAPYPNYDRDLLTVDLSRVTPNLMDHLCGNGRVLSKHKQIPGLIQNMTVRCCELPYPEQACCGEEEKLAFIEDLCGPRRNSWKDPALCCTLSPGDKQANCFNTNYLRNVALVAGDTGNATGLGQQGPTGGTNVGPAPGSKEE.

An N-terminal signal peptide occupies residues 1–19; the sequence is MGTIRSSALILACLALASA. Disordered regions lie at residues 46–87 and 119–171; these read GYAA…SSPE and QKEQ…WNPA. Residues 129-154 show a composition bias toward basic and acidic residues; sequence IEQKEIDPPVQHQEEIVQSRQKEEKP. 2 consecutive repeat copies span residues 172-301 and 305-427. Residues 172–427 are 2 X approximate repeats; the sequence is RHCQQGRRGI…FAHLAPYPNY (256 aa). N-linked (GlcNAc...) asparagine glycosylation is found at Asn376, Asn466, and Asn538. A disordered region spans residues 539-562; sequence ATGLGQQGPTGGTNVGPAPGSKEE. Over residues 543–552 the composition is skewed to gly residues; the sequence is GQQGPTGGTN. Ser559 carries the post-translational modification Phosphoserine.

Interacts (via C-terminus) with HSPG2 (via C-terminus). Interacts with EFEMP1/FBLN3 and LAMB3. Interacts with MMP9.

It is found in the secreted. Its subcellular location is the extracellular space. The protein localises to the extracellular matrix. In terms of biological role, involved in endochondral bone formation as negative regulator of bone mineralization. Stimulates the proliferation of endothelial cells and promotes angiogenesis. Inhibits MMP9 proteolytic activity. The chain is Extracellular matrix protein 1 (Ecm1) from Rattus norvegicus (Rat).